The chain runs to 1002 residues: Mitogen-activated protein kinase kinase kinase 21 (1002 aa).

The interval 1 to 26 (MALPVAEGTADTPLSPARDDSGSTSS) is disordered. The SH3 domain occupies 24-88 (TSSGMWAALY…PASYVAPCGP (65 aa)). The 281-residue stretch at 110 to 390 (LELKELIGAG…QLTAIEEAVL (281 aa)) folds into the Protein kinase domain. Residues 116–124 (IGAGGFGQV) and Lys-137 each bind ATP. The active-site Proton acceptor is Asp-247. A Phosphothreonine; by autocatalysis modification is found at Thr-283. At Ser-287 the chain carries Phosphoserine; by autocatalysis and MAP4K1. 2 leucine-zipper regions span residues 409-430 (IQQM…EEEL) and 444-466 (LRRR…LNVL). 6 disordered regions span residues 508 to 531 (TVQA…PPGS), 574 to 604 (GCTW…NSPW), 640 to 689 (HRKP…VGAP), 721 to 778 (AQAP…SHSS), 797 to 823 (LGNA…SGCE), and 878 to 899 (QSAP…RDLA). Residues Ser-512, Ser-527, and Ser-531 each carry the phosphoserine modification. Position 576 is a phosphothreonine (Thr-576). The segment covering 584 to 596 (TKERPEGRERVRP) has biased composition (basic and acidic residues). Position 598 is a phosphoserine (Ser-598). Over residues 661 to 677 (DSQREDSSEAESREEGS) the composition is skewed to basic and acidic residues. Composition is skewed to low complexity over residues 740-758 (QPAS…QPSA) and 766-778 (STLL…SHSS).

The protein belongs to the protein kinase superfamily. STE Ser/Thr protein kinase family. MAP kinase kinase kinase subfamily. As to quaternary structure, homodimer. Interacts with TLR4. It depends on Mg(2+) as a cofactor. Post-translationally, autophosphorylation on serine and threonine residues within the activation loop plays a role in enzyme activation.

It carries out the reaction L-seryl-[protein] + ATP = O-phospho-L-seryl-[protein] + ADP + H(+). The enzyme catalyses L-threonyl-[protein] + ATP = O-phospho-L-threonyl-[protein] + ADP + H(+). Homodimerization via the leucine zipper domains is required for autophosphorylation and subsequent activation. Negative regulator of TLR4 signaling. Does not activate JNK1/MAPK8 pathway, p38/MAPK14, nor ERK2/MAPK1 pathways. In Mus musculus (Mouse), this protein is Mitogen-activated protein kinase kinase kinase 21 (Map3k21).